Reading from the N-terminus, the 1468-residue chain is Centrosomal protein of 290 kDa (1468 aa).

Coiled-coil stretches lie at residues 1-25 (ERQL…VGEK), 52-121 (SLSE…IEQA), 172-292 (KMYE…DEKA), 318-528 (VASK…EAQK), 559-592 (RIIL…ILSR), 627-688 (HTLK…QADN), and 736-1441 (IKLK…SEQF). Positions 1060 to 1468 (TTGLTVDQVM…QENPVNFPIY (409 aa)) are self-association (with itself or N-terminus). The tract at residues 1130–1152 (LSKDAYSRPSTSGIDSDDHYQRE) is disordered.

As to quaternary structure, part of the tectonic-like complex (also named B9 complex). Interacts with ATF4 via its N-terminal region. Associates with the BBSome complex, interacting (via N-terminus) with BBS4. Interacts with IQCB1/NPHP5; IQCB1 and CEP290/NPHP6 are proposed to form a functional NPHP5-6 module localized to the centrosome. Interacts with NPHP4; the interaction likely requires additional interactors. Interacts with ZNF423, FAM161A, CEP162, CEP162, CEP131, TALPID3, CCDC13, CC2D2A, RPGRIP1. Can self-associate (homo- or heteromeric). Interacts with CCP110; required for suppressing cilia formation. Interacts with RPGR. Associates (via C-terminus) with microtubules; association to microtubule is reduced in response to cellular stress, such as ultraviolet light (UV) radiation or heat shock, in a process that requires p38 MAP kinase signaling. Interacts with FAM161A. Interacts with PCM1. Interacts with CCDC66. Interacts with ARMC9 and CSPP1. Ubiquitinated. May undergo monoubiquitination; monoubiquitination is inhibited in response to cellular stress, such as ultraviolet light (UV) radiation or heat shock, but does not cause its displacement from centriolar satellites.

It is found in the cytoplasm. The protein localises to the cytoskeleton. It localises to the microtubule organizing center. Its subcellular location is the centrosome. The protein resides in the centriolar satellite. It is found in the nucleus. The protein localises to the cell projection. It localises to the cilium. Its subcellular location is the cilium basal body. The protein resides in the centriole. It is found in the cytoplasmic vesicle. Functionally, involved in early and late steps in cilia formation. Its association with CCP110 is required for inhibition of primary cilia formation by CCP110. May play a role in early ciliogenesis in the disappearance of centriolar satellites and in the transition of primary ciliar vesicles (PCVs) to capped ciliary vesicles (CCVs). Required for the centrosomal recruitment of RAB8A and for the targeting of centriole satellite proteins to centrosomes such as of PCM1. Required for the correct localization of ciliary and phototransduction proteins in retinal photoreceptor cells; may play a role in ciliary transport processes. Required for efficient recruitment of RAB8A to primary cilium. In the ciliary transition zone is part of the tectonic-like complex which is required for tissue-specific ciliogenesis and may regulate ciliary membrane composition. Involved in regulation of the BBSome complex integrity, specifically for presence of BBS2, BBS5 and BBS8/TTC8 in the complex, and in ciliary targeting of selected BBSome cargos. May play a role in controlling entry of the BBSome complex to cilia possibly implicating IQCB1/NPHP5. Activates ATF4-mediated transcription. The chain is Centrosomal protein of 290 kDa (CEP290) from Bos taurus (Bovine).